A 106-amino-acid chain; its full sequence is uncharacterized protein (106 aa).

It belongs to the HesB/IscA family.

This is an uncharacterized protein from Rhodobacter capsulatus (Rhodopseudomonas capsulata).